The primary structure comprises 258 residues: Adenylate kinase (258 aa).

Position 52 to 57 (52 to 57 (GAGKGT)) interacts with ATP. The segment at 72–101 (ATGDMLRSQVAKKTALGKEAKKIMDQGGLV) is NMP. AMP-binding positions include T73, R78, 99-101 (GLV), 128-131 (GFPR), and Q135. Residues 169–206 (GRLVHPASGRSYHKIFNPPKEEMKDDVTGEPLIQRSDD) form an LID region. Residues R170 and 179 to 180 (SY) each bind ATP. AMP is bound by residues R203 and R214. Residue Q242 participates in ATP binding.

The protein belongs to the adenylate kinase family. AK2 subfamily. Monomer.

The protein resides in the cytoplasm. It localises to the cytosol. It is found in the mitochondrion intermembrane space. It catalyses the reaction AMP + ATP = 2 ADP. Functionally, catalyzes the reversible transfer of the terminal phosphate group between ATP and AMP. Plays an important role in cellular energy homeostasis and in adenine nucleotide metabolism. Adenylate kinase activity is critical for regulation of the phosphate utilization and the AMP de novo biosynthesis pathways. In Aspergillus niger (strain ATCC MYA-4892 / CBS 513.88 / FGSC A1513), this protein is Adenylate kinase (adk1).